A 391-amino-acid polypeptide reads, in one-letter code: Phosphoglycerate kinase (391 aa).

Residues D21–N23, R36, H59–R62, R113, and R146 contribute to the substrate site. Residues K197, E319, and G345–T348 each bind ATP.

The protein belongs to the phosphoglycerate kinase family. In terms of assembly, monomer.

It is found in the cytoplasm. It carries out the reaction (2R)-3-phosphoglycerate + ATP = (2R)-3-phospho-glyceroyl phosphate + ADP. It participates in carbohydrate degradation; glycolysis; pyruvate from D-glyceraldehyde 3-phosphate: step 2/5. The protein is Phosphoglycerate kinase of Methylococcus capsulatus (strain ATCC 33009 / NCIMB 11132 / Bath).